Here is a 441-residue protein sequence, read N- to C-terminus: Glutamyl-tRNA reductase (441 aa).

Substrate is bound by residues 58 to 61 (TCNR), Ser-116, 121 to 123 (EPD), and Gln-127. Cys-59 functions as the Nucleophile in the catalytic mechanism. 195–200 (GAGMAG) contacts NADP(+).

Belongs to the glutamyl-tRNA reductase family. Homodimer.

The catalysed reaction is (S)-4-amino-5-oxopentanoate + tRNA(Glu) + NADP(+) = L-glutamyl-tRNA(Glu) + NADPH + H(+). Its pathway is porphyrin-containing compound metabolism; protoporphyrin-IX biosynthesis; 5-aminolevulinate from L-glutamyl-tRNA(Glu): step 1/2. Catalyzes the NADPH-dependent reduction of glutamyl-tRNA(Glu) to glutamate 1-semialdehyde (GSA). The chain is Glutamyl-tRNA reductase from Ignicoccus hospitalis (strain KIN4/I / DSM 18386 / JCM 14125).